A 996-amino-acid chain; its full sequence is Cilia- and flagella-associated protein 251 (996 aa).

11 WD repeats span residues 73–114 (GHCN…PKKT), 118–164 (PHPN…EPCL), 168–211 (EFDR…KGFN), 219–258 (PSLK…EKVD), 282–319 (KGSN…IAWF), 399–438 (SIVS…SVLS), 445–485 (TDKE…WQNS), 494–533 (QGKP…FDVN), 547–593 (IHHS…YSKQ), 615–658 (EQET…FKFC), and 719–759 (AHPD…LEQI). The tract at residues 971–996 (DLEGEERDDNIEDQYEDEENEEYDQD) is disordered.

The protein localises to the cell projection. The protein resides in the cilium. In terms of biological role, as component of a spoke-associated complex, regulates ciliary mobility by mediating a stable and functional assembly of the radial spoke 3 (RS3). The polypeptide is Cilia- and flagella-associated protein 251 (Tetrahymena thermophila (strain SB210)).